Consider the following 132-residue polypeptide: Aspartate 1-decarboxylase (132 aa).

Serine 25 (schiff-base intermediate with substrate; via pyruvic acid) is an active-site residue. Serine 25 carries the post-translational modification Pyruvic acid (Ser). Position 57 (threonine 57) interacts with substrate. Tyrosine 58 serves as the catalytic Proton donor. 73-75 provides a ligand contact to substrate; it reads GAA.

The protein belongs to the PanD family. Heterooctamer of four alpha and four beta subunits. The cofactor is pyruvate. Post-translationally, is synthesized initially as an inactive proenzyme, which is activated by self-cleavage at a specific serine bond to produce a beta-subunit with a hydroxyl group at its C-terminus and an alpha-subunit with a pyruvoyl group at its N-terminus.

It is found in the cytoplasm. The catalysed reaction is L-aspartate + H(+) = beta-alanine + CO2. It functions in the pathway cofactor biosynthesis; (R)-pantothenate biosynthesis; beta-alanine from L-aspartate: step 1/1. Catalyzes the pyruvoyl-dependent decarboxylation of aspartate to produce beta-alanine. In Pelotomaculum thermopropionicum (strain DSM 13744 / JCM 10971 / SI), this protein is Aspartate 1-decarboxylase.